We begin with the raw amino-acid sequence, 289 residues long: Pantothenate synthetase (289 aa).

An ATP-binding site is contributed by 28–35 (MGCLHEGH). The active-site Proton donor is the histidine 35. Residue glutamine 59 participates in (R)-pantoate binding. A beta-alanine-binding site is contributed by glutamine 59. Residue 147-150 (GLKD) coordinates ATP. (R)-pantoate is bound at residue glutamine 153. Residues valine 176 and 184 to 187 (MSSR) each bind ATP.

It belongs to the pantothenate synthetase family. Homodimer.

It localises to the cytoplasm. The enzyme catalyses (R)-pantoate + beta-alanine + ATP = (R)-pantothenate + AMP + diphosphate + H(+). The protein operates within cofactor biosynthesis; (R)-pantothenate biosynthesis; (R)-pantothenate from (R)-pantoate and beta-alanine: step 1/1. Its function is as follows. Catalyzes the condensation of pantoate with beta-alanine in an ATP-dependent reaction via a pantoyl-adenylate intermediate. In Magnetococcus marinus (strain ATCC BAA-1437 / JCM 17883 / MC-1), this protein is Pantothenate synthetase.